The following is a 548-amino-acid chain: Chaperonin GroEL (548 aa).

ATP contacts are provided by residues 30–33 (TLGP), Lys-51, 87–91 (DGTTT), Gly-415, 479–481 (NAA), and Asp-495.

This sequence belongs to the chaperonin (HSP60) family. As to quaternary structure, forms a cylinder of 14 subunits composed of two heptameric rings stacked back-to-back. Interacts with the co-chaperonin GroES.

Its subcellular location is the cytoplasm. The enzyme catalyses ATP + H2O + a folded polypeptide = ADP + phosphate + an unfolded polypeptide.. Its function is as follows. Together with its co-chaperonin GroES, plays an essential role in assisting protein folding. The GroEL-GroES system forms a nano-cage that allows encapsulation of the non-native substrate proteins and provides a physical environment optimized to promote and accelerate protein folding. This is Chaperonin GroEL from Vibrio campbellii (strain ATCC BAA-1116).